The primary structure comprises 50 residues: uncharacterized protein (50 aa).

This is an uncharacterized protein from His1 virus (isolate Australia/Victoria) (His1V).